Reading from the N-terminus, the 517-residue chain is Probable bifunctional methylthioribulose-1-phosphate dehydratase/enolase-phosphatase E1 1 (517 aa).

The interval 1–240 (MAAAALNGLK…AIKLYQLGLD (240 aa)) is methylthioribulose-1-phosphate dehydratase. Substrate is bound at residue cysteine 112. Residues histidine 130 and histidine 132 each coordinate Zn(2+). The active-site Proton donor/acceptor; for methylthioribulose-1-phosphate dehydratase activity is glutamate 155. Zn(2+) is bound at residue histidine 205. An enolase-phosphatase E1 region spans residues 278–517 (IVLDIEGTTT…FKTITSFSDI (240 aa)). Mg(2+)-binding residues include aspartate 281 and glutamate 283. Substrate-binding positions include 416–417 (SS) and lysine 450. Aspartate 476 is a Mg(2+) binding site.

The protein in the N-terminal section; belongs to the aldolase class II family. MtnB subfamily. It in the C-terminal section; belongs to the HAD-like hydrolase superfamily. MasA/MtnC family. The cofactor is Zn(2+). Requires Mg(2+) as cofactor.

It catalyses the reaction 5-(methylsulfanyl)-D-ribulose 1-phosphate = 5-methylsulfanyl-2,3-dioxopentyl phosphate + H2O. It carries out the reaction 5-methylsulfanyl-2,3-dioxopentyl phosphate + H2O = 1,2-dihydroxy-5-(methylsulfanyl)pent-1-en-3-one + phosphate. It participates in amino-acid biosynthesis; L-methionine biosynthesis via salvage pathway; L-methionine from S-methyl-5-thio-alpha-D-ribose 1-phosphate: step 2/6. Its pathway is amino-acid biosynthesis; L-methionine biosynthesis via salvage pathway; L-methionine from S-methyl-5-thio-alpha-D-ribose 1-phosphate: step 3/6. The protein operates within amino-acid biosynthesis; L-methionine biosynthesis via salvage pathway; L-methionine from S-methyl-5-thio-alpha-D-ribose 1-phosphate: step 4/6. This is Probable bifunctional methylthioribulose-1-phosphate dehydratase/enolase-phosphatase E1 1 from Vitis vinifera (Grape).